A 387-amino-acid polypeptide reads, in one-letter code: Putative actin-29 (387 aa).

This sequence belongs to the actin family.

It localises to the cytoplasm. It is found in the cytoskeleton. The enzyme catalyses ATP + H2O = ADP + phosphate + H(+). Actins are highly conserved proteins that are involved in various types of cell motility and are ubiquitously expressed in all eukaryotic cells. Multiple isoforms are involved in various cellular functions such as cytoskeleton structure, cell mobility, chromosome movement and muscle contraction. The sequence is that of Putative actin-29 (act29) from Dictyostelium discoideum (Social amoeba).